We begin with the raw amino-acid sequence, 1136 residues long: Type I inositol polyphosphate 5-phosphatase 13 (1136 aa).

WD repeat units follow at residues 147–185 (ETQT…EAGC), 205–244 (VTTS…VSHD), 259–297 (AHRG…KSLL), 436–475 (EDTR…RDVN), and 515–552 (SHNE…PLDN). Catalytic stretches follow at residues 782 to 798 (DMVA…FGIT) and 861 to 876 (KKRI…YRDT). Lysine 940 participates in a covalent cross-link: Glycyl lysine isopeptide (Lys-Gly) (interchain with G-Cter in ubiquitin). The tract at residues 1104 to 1136 (KNLGGSRRYPTDITRNGSTRPRTEDSVRRGKSR) is disordered. A compositionally biased stretch (basic and acidic residues) spans 1124 to 1136 (PRTEDSVRRGKSR).

This sequence belongs to the inositol polyphosphate 5-phosphatase family. In terms of assembly, interacts with KIN10, but not with PHOT1. It depends on Mg(2+) as a cofactor. Expressed in young seedlings and flowers. Highly expressed in anther and pollen grains, but not in pistils. Not detected in maturated roots, stems and rosette leaves.

It is found in the nucleus. The enzyme catalyses 1D-myo-inositol 1,4,5-trisphosphate + H2O = 1D-myo-inositol 1,4-bisphosphate + phosphate. In terms of biological role, converts inositol 1,4,5-trisphosphate (Ins(1,4,5)P3) to inositol 1,4-bisphosphate. Modulates cotyledon vein development through regulating auxin homeostasis. Involved in blue light responses. Decreases the amount of KIN10 degraded by the proteasome under low nutrient conditions. Participates with IP5P12 in the control of Ins(1,4,5)P3/Ca(2+) levels that is crucial for maintaining pollen dormancy and regulating early germination of pollen. May modulate auxin transport by regulating vesicle trafficking and thereby plays a role in root gravitropism. The chain is Type I inositol polyphosphate 5-phosphatase 13 from Arabidopsis thaliana (Mouse-ear cress).